We begin with the raw amino-acid sequence, 178 residues long: GTP-dependent dephospho-CoA kinase (178 aa).

5 residues coordinate GTP: Asp-48, Ile-49, Asp-67, Lys-69, and Glu-126.

This sequence belongs to the GTP-dependent DPCK family.

It catalyses the reaction 3'-dephospho-CoA + GTP = GDP + CoA + H(+). It functions in the pathway cofactor biosynthesis; coenzyme A biosynthesis. Functionally, catalyzes the GTP-dependent phosphorylation of the 3'-hydroxyl group of dephosphocoenzyme A to form coenzyme A (CoA). This Methanothrix thermoacetophila (strain DSM 6194 / JCM 14653 / NBRC 101360 / PT) (Methanosaeta thermophila) protein is GTP-dependent dephospho-CoA kinase.